A 394-amino-acid chain; its full sequence is Phosphopentomutase (394 aa).

D13, D286, H291, D327, H328, and H339 together coordinate Mn(2+).

Belongs to the phosphopentomutase family. Mn(2+) serves as cofactor.

It localises to the cytoplasm. It catalyses the reaction 2-deoxy-alpha-D-ribose 1-phosphate = 2-deoxy-D-ribose 5-phosphate. The enzyme catalyses alpha-D-ribose 1-phosphate = D-ribose 5-phosphate. The protein operates within carbohydrate degradation; 2-deoxy-D-ribose 1-phosphate degradation; D-glyceraldehyde 3-phosphate and acetaldehyde from 2-deoxy-alpha-D-ribose 1-phosphate: step 1/2. In terms of biological role, isomerase that catalyzes the conversion of deoxy-ribose 1-phosphate (dRib-1-P) and ribose 1-phosphate (Rib-1-P) to deoxy-ribose 5-phosphate (dRib-5-P) and ribose 5-phosphate (Rib-5-P), respectively. This chain is Phosphopentomutase, found in Bacillus mycoides (strain KBAB4) (Bacillus weihenstephanensis).